The sequence spans 180 residues: ATP synthase subunit b (180 aa).

Residues 15 to 35 (LIPEVPELVIGLLAFAIVFFV) form a helical membrane-spanning segment.

It belongs to the ATPase B chain family. As to quaternary structure, F-type ATPases have 2 components, F(1) - the catalytic core - and F(0) - the membrane proton channel. F(1) has five subunits: alpha(3), beta(3), gamma(1), delta(1), epsilon(1). F(0) has three main subunits: a(1), b(2) and c(10-14). The alpha and beta chains form an alternating ring which encloses part of the gamma chain. F(1) is attached to F(0) by a central stalk formed by the gamma and epsilon chains, while a peripheral stalk is formed by the delta and b chains.

It is found in the cell membrane. Its function is as follows. F(1)F(0) ATP synthase produces ATP from ADP in the presence of a proton or sodium gradient. F-type ATPases consist of two structural domains, F(1) containing the extramembraneous catalytic core and F(0) containing the membrane proton channel, linked together by a central stalk and a peripheral stalk. During catalysis, ATP synthesis in the catalytic domain of F(1) is coupled via a rotary mechanism of the central stalk subunits to proton translocation. In terms of biological role, component of the F(0) channel, it forms part of the peripheral stalk, linking F(1) to F(0). The sequence is that of ATP synthase subunit b from Streptomyces avermitilis (strain ATCC 31267 / DSM 46492 / JCM 5070 / NBRC 14893 / NCIMB 12804 / NRRL 8165 / MA-4680).